The sequence spans 129 residues: SOSS complex subunit C homolog (129 aa).

The segment at 105-129 (RLEPLPSPATTPTTPNAPPSHSISK) is disordered.

It belongs to the SOSS-C family.

The chain is SOSS complex subunit C homolog from Drosophila simulans (Fruit fly).